The chain runs to 301 residues: ATP synthase gamma chain (301 aa).

It belongs to the ATPase gamma chain family. In terms of assembly, F-type ATPases have 2 components, CF(1) - the catalytic core - and CF(0) - the membrane proton channel. CF(1) has five subunits: alpha(3), beta(3), gamma(1), delta(1), epsilon(1). CF(0) has three main subunits: a, b and c.

The protein localises to the cell inner membrane. Functionally, produces ATP from ADP in the presence of a proton gradient across the membrane. The gamma chain is believed to be important in regulating ATPase activity and the flow of protons through the CF(0) complex. The polypeptide is ATP synthase gamma chain (Helicobacter pylori (strain Shi470)).